A 953-amino-acid polypeptide reads, in one-letter code: Zinc finger protein 507 (953 aa).

Residue serine 95 is modified to Phosphoserine. 3 C2H2-type zinc fingers span residues 125–147, 155–185, and 248–270; these read YQCS…IKQH, LMCS…ANIH, and YRCL…AWKH. Serine 427 carries the phosphoserine modification. Positions 470–489 are disordered; it reads KGLATDENAPPGRRRTNSES. 5 consecutive C2H2-type zinc fingers follow at residues 641–663, 669–691, 697–720, 758–780, and 786–808; these read YRCR…LRVH, YQCP…MIHH, YQCK…REQH, YRCD…RRIH, and YRCS…MWKH. The segment at 831–888 is disordered; that stretch reads GRVLGKSPGKTQLKSSEESADPVTGSSENAVSSSELMSQTPSEVLGTNENEKLSPTSN. The segment covering 854-888 has biased composition (polar residues); it reads TGSSENAVSSSELMSQTPSEVLGTNENEKLSPTSN. A C2H2-type 9 zinc finger spans residues 911–933; it reads FCCCICGFESTSKENLLDHMKEH.

The protein belongs to the krueppel C2H2-type zinc-finger protein family.

Its subcellular location is the nucleus. In terms of biological role, may be involved in transcriptional regulation. The sequence is that of Zinc finger protein 507 (ZNF507) from Homo sapiens (Human).